Consider the following 289-residue polypeptide: Probable phosphoribulokinase (289 aa).

Glycine 12–threonine 20 contacts ATP.

The protein belongs to the phosphoribulokinase family.

The enzyme catalyses D-ribulose 5-phosphate + ATP = D-ribulose 1,5-bisphosphate + ADP + H(+). This chain is Probable phosphoribulokinase (prkB), found in Escherichia coli (strain K12).